The chain runs to 185 residues: Ribosome-recycling factor (185 aa).

The protein belongs to the RRF family.

Its subcellular location is the cytoplasm. In terms of biological role, responsible for the release of ribosomes from messenger RNA at the termination of protein biosynthesis. May increase the efficiency of translation by recycling ribosomes from one round of translation to another. The chain is Ribosome-recycling factor from Corynebacterium jeikeium (strain K411).